The primary structure comprises 114 residues: Large ribosomal subunit protein bL19 (114 aa).

This sequence belongs to the bacterial ribosomal protein bL19 family.

Functionally, this protein is located at the 30S-50S ribosomal subunit interface and may play a role in the structure and function of the aminoacyl-tRNA binding site. The chain is Large ribosomal subunit protein bL19 from Lysinibacillus sphaericus (strain C3-41).